The following is a 63-amino-acid chain: Cecropin-C (63 aa).

A signal peptide spans 1-23 (MNFYKIFVFVALILAISIGQSEA). R62 carries the post-translational modification Arginine amide.

It belongs to the cecropin family.

The protein localises to the secreted. Cecropins have lytic and antibacterial activity against several Gram-positive and Gram-negative bacteria. This is Cecropin-C (CecC) from Drosophila mauritiana (Fruit fly).